The following is a 496-amino-acid chain: Putative (R)-citramalate synthase CimA (496 aa).

The Pyruvate carboxyltransferase domain maps to 3–253; it reads VRVLDTTLRD…DTSINIEMLY (251 aa).

Belongs to the alpha-IPM synthase/homocitrate synthase family. Homodimer.

The catalysed reaction is pyruvate + acetyl-CoA + H2O = (3R)-citramalate + CoA + H(+). It participates in amino-acid biosynthesis; L-isoleucine biosynthesis; 2-oxobutanoate from pyruvate: step 1/3. Catalyzes the condensation of pyruvate and acetyl-coenzyme A to form (R)-citramalate. This Methanothermobacter thermautotrophicus (strain ATCC 29096 / DSM 1053 / JCM 10044 / NBRC 100330 / Delta H) (Methanobacterium thermoautotrophicum) protein is Putative (R)-citramalate synthase CimA.